A 258-amino-acid chain; its full sequence is MMAKRIIPCLDVKAGRVVKGVQFEGLVDAGDPVEAAKRYDEEGADELTFLDITATHEDRGIMEDVVRRTAEQVFIPLTVGGGIRTNDDIRRMLVAGADKCSINSAAVKRPEFVREAAEQFGSQCVVVAIDAKCVEHDKHGRPIRWEIFTHGGRQPTGIDALEWAHRMESFGSGEILLTSMDKDGTKSGYALEMTRAISDAVTIPVIASGGVGEPKHLLEGLRQGGADAVLAASIFHFREYTIPQVKRYLRDNHIAVRL.

Active-site residues include D11 and D130.

Belongs to the HisA/HisF family. In terms of assembly, heterodimer of HisH and HisF.

The protein localises to the cytoplasm. It carries out the reaction 5-[(5-phospho-1-deoxy-D-ribulos-1-ylimino)methylamino]-1-(5-phospho-beta-D-ribosyl)imidazole-4-carboxamide + L-glutamine = D-erythro-1-(imidazol-4-yl)glycerol 3-phosphate + 5-amino-1-(5-phospho-beta-D-ribosyl)imidazole-4-carboxamide + L-glutamate + H(+). The protein operates within amino-acid biosynthesis; L-histidine biosynthesis; L-histidine from 5-phospho-alpha-D-ribose 1-diphosphate: step 5/9. Its function is as follows. IGPS catalyzes the conversion of PRFAR and glutamine to IGP, AICAR and glutamate. The HisF subunit catalyzes the cyclization activity that produces IGP and AICAR from PRFAR using the ammonia provided by the HisH subunit. The polypeptide is Imidazole glycerol phosphate synthase subunit HisF (Magnetococcus marinus (strain ATCC BAA-1437 / JCM 17883 / MC-1)).